The chain runs to 609 residues: MSMLRIWSCIVHFFSVQALDSRIKPDIEFKRRQRIFINSSKEENGSSSSAVTVTRNPVLSSNSPSPPLWNTWEFRLYYLAFTVVVPFMIKAALATSSESNPNYYKFSGLLAHGWILGRKVDNSDPQYRFFRSNFFLLAILILLQIILKKVFVKFSKIPKTKFDFACGLVFVCFMYGINSVKLFTHAFIFFTLAHSLKRKRLIAAFAIWSYGIFTLFINQKMKNLPFNNIAIILSPMDQWYKGIVPRWDFFFNFTLLRLLSYSMDFLERWHEQLSRQPSIDYDDRRPEFRKSLSGSTLQTIYESGKNVLEEKERLVAEHHIQDYNFINFIAYITYAPLFLVGPIITFNDYLYQSENKLPSLTKKNIGFYALKVFSSLLLMEIILHYIYVGAIARTKAWNNDTPLQQAMIALFNLNIMYLKLLIPWRLFRLWAMVDGIDAPENMLRCVDNNYSTVGFWRAWHTSFNKWVIRYIYVPFGGSNNKILTSFAVFSFVAIWHDIQLRVLFWGWLTVLLLLGETYITNCFSRYRFRSWYRFVCGIGAAINICMMMIINVYGFCLGAEGTKLLLKGIFNNSHSPEFLTAVMVSLFIAVQVMFEIREEEKRHGINLKC.

The first 18 residues, 1-18, serve as a signal peptide directing secretion; it reads MSMLRIWSCIVHFFSVQA. Over 19-75 the chain is Lumenal; sequence LDSRIKPDIEFKRRQRIFINSSKEENGSSSSAVTVTRNPVLSSNSPSPPLWNTWEFR. Residues 76–96 traverse the membrane as a helical segment; the sequence is LYYLAFTVVVPFMIKAALATS. Residues 97 to 133 are Cytoplasmic-facing; it reads SESNPNYYKFSGLLAHGWILGRKVDNSDPQYRFFRSN. Residues 134 to 154 traverse the membrane as a helical segment; that stretch reads FFLLAILILLQIILKKVFVKF. Over 155–169 the chain is Lumenal; the sequence is SKIPKTKFDFACGLV. The helical transmembrane segment at 170–190 threads the bilayer; sequence FVCFMYGINSVKLFTHAFIFF. Over 191-200 the chain is Cytoplasmic; it reads TLAHSLKRKR. The chain crosses the membrane as a helical span at residues 201 to 221; the sequence is LIAAFAIWSYGIFTLFINQKM. The Lumenal portion of the chain corresponds to 222–324; that stretch reads KNLPFNNIAI…VAEHHIQDYN (103 aa). Residues 325–345 form a helical membrane-spanning segment; it reads FINFIAYITYAPLFLVGPIIT. At 346 to 371 the chain is on the cytoplasmic side; it reads FNDYLYQSENKLPSLTKKNIGFYALK. Residues 372–392 form a helical membrane-spanning segment; it reads VFSSLLLMEIILHYIYVGAIA. Residues 393 to 406 are Lumenal-facing; the sequence is RTKAWNNDTPLQQA. A helical transmembrane segment spans residues 407 to 427; the sequence is MIALFNLNIMYLKLLIPWRLF. The Cytoplasmic portion of the chain corresponds to 428-474; the sequence is RLWAMVDGIDAPENMLRCVDNNYSTVGFWRAWHTSFNKWVIRYIYVP. Residues 475 to 495 form a helical membrane-spanning segment; the sequence is FGGSNNKILTSFAVFSFVAIW. H496 is a catalytic residue. Topologically, residues 496–502 are lumenal; the sequence is HDIQLRV. A helical transmembrane segment spans residues 503 to 523; sequence LFWGWLTVLLLLGETYITNCF. The Cytoplasmic segment spans residues 524–533; it reads SRYRFRSWYR. Residues 534-554 form a helical membrane-spanning segment; it reads FVCGIGAAINICMMMIINVYG. At 555 to 575 the chain is on the lumenal side; sequence FCLGAEGTKLLLKGIFNNSHS. Residues 576 to 596 form a helical membrane-spanning segment; sequence PEFLTAVMVSLFIAVQVMFEI. The Cytoplasmic segment spans residues 597–609; it reads REEEKRHGINLKC.

Belongs to the membrane-bound acyltransferase family.

The protein resides in the endoplasmic reticulum membrane. In terms of biological role, probable membrane-bound O-acyltransferase. Together with GUP1, has an influence on the chemical composition of the yeast extracellular matrix (yECM) in yeast multicellular aggregates, such as biofilms and colonies. This Saccharomyces cerevisiae (strain ATCC 204508 / S288c) (Baker's yeast) protein is Membrane-bound O-acyltransferase GUP2 (GUP2).